Here is a 505-residue protein sequence, read N- to C-terminus: Glutamate--tRNA ligase (505 aa).

Residues 12 to 22 carry the 'HIGH' region motif; sequence PSPTGDPHVGT. Positions 253 to 257 match the 'KMSKS' region motif; sequence KLSKR. Lys256 lines the ATP pocket.

It belongs to the class-I aminoacyl-tRNA synthetase family. Glutamate--tRNA ligase type 1 subfamily. In terms of assembly, monomer.

Its subcellular location is the cytoplasm. The catalysed reaction is tRNA(Glu) + L-glutamate + ATP = L-glutamyl-tRNA(Glu) + AMP + diphosphate. In terms of biological role, catalyzes the attachment of glutamate to tRNA(Glu) in a two-step reaction: glutamate is first activated by ATP to form Glu-AMP and then transferred to the acceptor end of tRNA(Glu). The polypeptide is Glutamate--tRNA ligase (Chlamydophila psittaci (strain ATCC VR-125 / 6BC) (Chlamydia psittaci)).